Consider the following 245-residue polypeptide: Uridylate kinase (245 aa).

20–23 (KVSG) lines the ATP pocket. Residue G62 participates in UMP binding. The ATP site is built by G63 and R67. Residues D81 and 142-149 (IGSPFFTT) each bind UMP. ATP-binding residues include T169, Q170, Y175, and D178.

It belongs to the UMP kinase family. Homohexamer.

The protein resides in the cytoplasm. The enzyme catalyses UMP + ATP = UDP + ADP. It functions in the pathway pyrimidine metabolism; CTP biosynthesis via de novo pathway; UDP from UMP (UMPK route): step 1/1. Its activity is regulated as follows. Inhibited by UTP. Catalyzes the reversible phosphorylation of UMP to UDP. This is Uridylate kinase from Anaplasma marginale (strain St. Maries).